We begin with the raw amino-acid sequence, 465 residues long: Cysteine--tRNA ligase (465 aa).

Cys29 is a Zn(2+) binding site. Positions 31–41 (PTVYNYIHIGN) match the 'HIGH' region motif. Residues Cys209, His234, and Glu238 each coordinate Zn(2+). Residues 266-270 (KMSKS) carry the 'KMSKS' region motif. Position 269 (Lys269) interacts with ATP. Ser270 carries the phosphoserine modification.

The protein belongs to the class-I aminoacyl-tRNA synthetase family. As to quaternary structure, monomer. It depends on Zn(2+) as a cofactor.

It localises to the cytoplasm. The catalysed reaction is tRNA(Cys) + L-cysteine + ATP = L-cysteinyl-tRNA(Cys) + AMP + diphosphate. This is Cysteine--tRNA ligase from Bacillus cereus (strain G9842).